The following is a 344-amino-acid chain: MVSSKELPPSTVPFFPNQFFRNQFRSKPQYPPPNTNLSEKVAIISGGNTGLGFEAATQLLSFKLGTLILAVRSTAKGEAAASKLRARYPKATIHVWKLDMSSYDSIQEFAGRVNTQLPRLDMVILNAGVSKLEFGTVSSTGHEETVQINYLSTALLAILLLPALKSKSPPGIPGRLTIVSAALTLVAKFPNRDESPLLPSFDNPKYWDPNDQYCSSKLLMHLFLWKLVDYISADDVIVNLADPGFVKGTELARDVSGGQRVGLSIFASLTGRNKKHGASTYVDAVVNKGKESHGGFIMSWQIHPYPTLLYTSEGQQITERLWDETLAEFEFANVRGIIESMKGN.

Positions 51, 76, 99, 126, 213, and 217 each coordinate NADP(+). The active-site Proton donor is the Tyr-213. Residue Lys-217 is the Lowers pKa of active site Tyr of the active site.

It belongs to the short-chain dehydrogenases/reductases (SDR) family.

Functionally, short chain dehydrogenase/reductase; part of the gene cluster that mediates the biosynthesis of the phthalide-terpenoid hybrid 11'-O-desmethylfendlerol. MfmJ seems not to be involved directly in the biosynthesis of 11'-O-desmethylfendlerol and its role has still to be determined. The biosynthesis of 11'-O-desmethylfendlerol begins with the NR-PKS mfmB that forms 3,5-dimethylorsellinic acid (DMOA), which is then transformed into the phthalide 5,7-dihydroxy-4-(hydroxymethyl)-6-methylphthalide by the cytochrome P450 monooxygenase mfmA and the hydrolase mfmC. Subsequently, the methyltransferase mfmE catalyzes 7-O-methylation to yield 5-hydroxy-4-(hydroxymethyl)-7-methoxy-6-methylphthalide, which undergoes C-3 hydroxylation by the cytochrome P450 monooxygenase mfmF. The resultant cyclopolic acid (2,5-dihydroxy-4-(hydroxymethyl)-7-methoxy-6-methylphthalide) is then farnesylated by the DMATS-type prenyltransferase mfmD to afford 5-O-farnesylcyclopolic acid. Finally, the Pyr4-family terpene cyclase mfmH cyclizes the farnesyl moiety of 5-O-farnesylcyclopolic acid into a drimane-like structure, thus completing the biosynthesis of 11'-O-desmethylfendlerol. The chain is Short chain dehydrogenase/reductase mfmJ from Annulohypoxylon moriforme (Filamentous fungus).